Consider the following 357-residue polypeptide: Histidine biosynthesis bifunctional protein HisB (357 aa).

The histidinol-phosphatase stretch occupies residues 1-168 (MSEKVLFIDR…IVFKLTKKHD (168 aa)). The Nucleophile role is filled by D9. Residues D9 and D11 each contribute to the Mg(2+) site. D11 (proton donor) is an active-site residue. Zn(2+) contacts are provided by C93, H95, C101, and C103. D130 provides a ligand contact to Mg(2+). Residues 169–357 (RHAKVVRNTK…KNLPSSKGLL (189 aa)) form an imidazoleglycerol-phosphate dehydratase region.

This sequence in the N-terminal section; belongs to the histidinol-phosphatase family. The protein in the C-terminal section; belongs to the imidazoleglycerol-phosphate dehydratase family. Mg(2+) serves as cofactor. Zn(2+) is required as a cofactor.

It localises to the cytoplasm. The enzyme catalyses D-erythro-1-(imidazol-4-yl)glycerol 3-phosphate = 3-(imidazol-4-yl)-2-oxopropyl phosphate + H2O. It carries out the reaction L-histidinol phosphate + H2O = L-histidinol + phosphate. The protein operates within amino-acid biosynthesis; L-histidine biosynthesis; L-histidine from 5-phospho-alpha-D-ribose 1-diphosphate: step 6/9. It participates in amino-acid biosynthesis; L-histidine biosynthesis; L-histidine from 5-phospho-alpha-D-ribose 1-diphosphate: step 8/9. The chain is Histidine biosynthesis bifunctional protein HisB from Buchnera aphidicola subsp. Baizongia pistaciae (strain Bp).